The sequence spans 683 residues: Protein distal antenna (683 aa).

The HTH psq-type domain maps to Thr-7 to Leu-58. Positions Lys-34–Asn-54 form a DNA-binding region, H-T-H motif. Disordered stretches follow at residues Thr-220–Asn-255, Ser-336–Gly-369, Ser-443–Ile-525, Asn-572–Glu-597, and Glu-652–Lys-683. Residues Ser-227 to Ser-242 are compositionally biased toward low complexity. Composition is skewed to polar residues over residues Pro-338–Gln-352 and Thr-445–Asp-460. The segment covering Ile-462 to Gly-478 has biased composition (acidic residues). Residues Ser-575–Asn-591 show a composition bias toward low complexity.

Homomers. Interacts with itself, danr, ey and dac to form a complex (or complexes) containing the RD factors.

The protein localises to the nucleus. In terms of biological role, probable transcription factor with a role in the retinal determination (RD) network. Regulates ato expression and is required for normal R8 induction and differentiation. Danr appears to repress Dan expression, but Dan is required for Danr expression anterior to the morphogenetic furrow (MF). Dan and Danr lie downstream of so and require dac function for highest levels of expression. Contributes to differentiation of antenna-specific characteristics; effector gene that acts downstream of homothorax (hth), Distal-less (Dll), cut (ct) and spineless (ss) genes to control differentiation of distal antennal structures. The protein is Protein distal antenna of Drosophila pseudoobscura pseudoobscura (Fruit fly).